Here is a 141-residue protein sequence, read N- to C-terminus: Large ribosomal subunit protein uL11 (141 aa).

Belongs to the universal ribosomal protein uL11 family. In terms of assembly, part of the ribosomal stalk of the 50S ribosomal subunit. Interacts with L10 and the large rRNA to form the base of the stalk. L10 forms an elongated spine to which L12 dimers bind in a sequential fashion forming a multimeric L10(L12)X complex. One or more lysine residues are methylated.

In terms of biological role, forms part of the ribosomal stalk which helps the ribosome interact with GTP-bound translation factors. The polypeptide is Large ribosomal subunit protein uL11 (Clostridium acetobutylicum (strain ATCC 824 / DSM 792 / JCM 1419 / IAM 19013 / LMG 5710 / NBRC 13948 / NRRL B-527 / VKM B-1787 / 2291 / W)).